Reading from the N-terminus, the 227-residue chain is MVDVVMAPCSPVECRTAVVIDVLRATSTIVTALSNGASGVIPVKTIEEALKKRKEGVLICGERNAQKPKGFDLGNSPLEYRKEKISGKTIVLTTTNGTQVIERIRSEEIIAASFLNLSAVVEYLKSKEDILLVCAGTNGRFSLEDFLLAGAVVKRLKRNDLGDGARAAERYFESVENTREEIKKHSSHAKRLISLGFEKDVEFCTTEDLFKTVPTLVNGVFILKEFP.

The protein belongs to the ComB family. Mg(2+) is required as a cofactor.

It catalyses the reaction (2R)-O-phospho-3-sulfolactate + H2O = (2R)-3-sulfolactate + phosphate. This Thermotoga petrophila (strain ATCC BAA-488 / DSM 13995 / JCM 10881 / RKU-1) protein is Probable 2-phosphosulfolactate phosphatase.